Consider the following 731-residue polypeptide: 1,4-alpha-glucan branching enzyme GlgB (731 aa).

Residues Cys-193 and Cys-617 are joined by a disulfide bond. The active-site Nucleophile is Asp-411. Catalysis depends on Glu-464, which acts as the Proton donor.

This sequence belongs to the glycosyl hydrolase 13 family. GlgB subfamily. In terms of assembly, monomer.

It catalyses the reaction Transfers a segment of a (1-&gt;4)-alpha-D-glucan chain to a primary hydroxy group in a similar glucan chain.. It functions in the pathway glycan biosynthesis; glycogen biosynthesis. The protein operates within capsule biogenesis; capsule polysaccharide biosynthesis. Functionally, essential enzyme that catalyzes the formation of the alpha-1,6-glucosidic linkages in glucan chains by scission of a 1,4-alpha-linked oligosaccharide from growing alpha-1,4-glucan chains and the subsequent attachment of the oligosaccharide to the alpha-1,6 position. Is involved in the biosynthesis of both glycogen and capsular alpha-D-glucan. In Mycobacterium tuberculosis (strain CDC 1551 / Oshkosh), this protein is 1,4-alpha-glucan branching enzyme GlgB (glgB).